A 743-amino-acid polypeptide reads, in one-letter code: MTISNTRPITPDLIASHGLKPDEYERILNLIGREPTFTELGIFSAMWNEHCSYKSSKKWLRTLPTKGPRVIQGPGENAGVVDIDDGDCVVFKMESHNHPSYIEPYQGAATGVGGILRDVFTMGARPIAAMNALRFGSPDHPKTRHLVSGVVAGVGGYGNSFGVPTVGGEVEFDARYNGNILVNAFAAGLAKTDAIFYSKAEGVGLPVVYLGAKTGRDGVGGATMASAEFDESIEEKRPTVQVGDPFTEKCLLEACLELMQTGAVIAIQDMGAAGLTCSAVEMGAKGDLGIELDLDKVPVREERMTAYEMMLSESQERMLMVLRPEKEEEAKAIFVKWGLDFAIVGKTTDDLRFRILHQGEEVANLPIKELGDEAPEYDRPWTPAKVPSPLATNDIPQADVADTLLQLVGSANNSSRRWVYEQYDTLIQGNSLQLPGGDAGVVRVEGHEAKALAFSSDVTPRYVEADPFEGGKQAVAECWRNLTATGALPLAATDNLNFGNPERPEIMSQLVHAIKGIGEACQALDFPIVSGNVSLYNETNGQAILPTPTIGGVGLVRDWSKMARIRFAVADETILLAGAPKSWGTHIGQSVYMRDIHGRTDGPAPHVDLAHERKVGDFVRGLIGDGLVTAVHDCSSGGLALAVAEMAMASGIGATIAAPAEHDAIPVFYGEDQGRYVVTVANGAVETVAARAKAAGVALPVIGRTGGDAVKLGDARPVSVNALRSAHEAWFPNYMGGDLAPDN.

The active site involves His50. Positions 53 and 92 each coordinate ATP. Residue Glu94 coordinates Mg(2+). Substrate-binding positions include 95-98 (SHNH) and Arg117. The active-site Proton acceptor is His96. Position 118 (Asp118) interacts with Mg(2+). Substrate is bound at residue Gln241. Asp269 lines the Mg(2+) pocket. A substrate-binding site is contributed by 313–315 (ESQ). 2 residues coordinate ATP: Asp494 and Gly531. Asn532 contributes to the Mg(2+) binding site. Substrate is bound at residue Ser534.

This sequence belongs to the FGAMS family. As to quaternary structure, monomer. Part of the FGAM synthase complex composed of 1 PurL, 1 PurQ and 2 PurS subunits.

Its subcellular location is the cytoplasm. It catalyses the reaction N(2)-formyl-N(1)-(5-phospho-beta-D-ribosyl)glycinamide + L-glutamine + ATP + H2O = 2-formamido-N(1)-(5-O-phospho-beta-D-ribosyl)acetamidine + L-glutamate + ADP + phosphate + H(+). It participates in purine metabolism; IMP biosynthesis via de novo pathway; 5-amino-1-(5-phospho-D-ribosyl)imidazole from N(2)-formyl-N(1)-(5-phospho-D-ribosyl)glycinamide: step 1/2. In terms of biological role, part of the phosphoribosylformylglycinamidine synthase complex involved in the purines biosynthetic pathway. Catalyzes the ATP-dependent conversion of formylglycinamide ribonucleotide (FGAR) and glutamine to yield formylglycinamidine ribonucleotide (FGAM) and glutamate. The FGAM synthase complex is composed of three subunits. PurQ produces an ammonia molecule by converting glutamine to glutamate. PurL transfers the ammonia molecule to FGAR to form FGAM in an ATP-dependent manner. PurS interacts with PurQ and PurL and is thought to assist in the transfer of the ammonia molecule from PurQ to PurL. In Sinorhizobium medicae (strain WSM419) (Ensifer medicae), this protein is Phosphoribosylformylglycinamidine synthase subunit PurL.